Consider the following 194-residue polypeptide: MLNVLIFGAPGSGKGTQSEELIRRYGFRHISTGELLRAEIKAQTELGQAAAGYINEGHLVPDSLIVDMMEKLISTLVDTEGIIFDGFPRTIPQAEAMETMLAHHGWKVDIVLNLQVPEEMLIERLLNRGKVSGRSDDNIETIRKRLDVYANETAPLVDFFTRKNVLHNVVGTGTIEEIALRIAPIVDKFRKVSN.

Residue 11–16 participates in ATP binding; it reads GSGKGT. Residues 31 to 60 form an NMP region; the sequence is STGELLRAEIKAQTELGQAAAGYINEGHLV. AMP-binding positions include Thr-32, Arg-37, 58-60, 86-89, and Gln-93; these read HLV and GFPR. The segment at 127-137 is LID; that stretch reads NRGKVSGRSDD. Arg-128 contacts ATP. AMP is bound by residues Arg-134 and Arg-145. Gly-173 is an ATP binding site.

The protein belongs to the adenylate kinase family. Monomer.

The protein localises to the cytoplasm. It catalyses the reaction AMP + ATP = 2 ADP. Its pathway is purine metabolism; AMP biosynthesis via salvage pathway; AMP from ADP: step 1/1. In terms of biological role, catalyzes the reversible transfer of the terminal phosphate group between ATP and AMP. Plays an important role in cellular energy homeostasis and in adenine nucleotide metabolism. In Porphyromonas gingivalis (strain ATCC BAA-308 / W83), this protein is Adenylate kinase.